Consider the following 419-residue polypeptide: MTDLIQMGKQAKQAAFALSQLSQQEKNHALALIAERLEAQQERILAENAKDIQAARENGLSESIIDRLLLTKERLTGIADDVRHVISLADPVGKIIDGGVLDSGLKLERIRTPLGVIGTIYEARPNVTIDVASLCLKTGNAVILRGGKETQHSNKILVEVIQNALQQAGLPEMAVQAITDPDRALVMELLHLDKYVDMIIPRGGAGLQALCRDNSSIPVIVGGIGVCHIFVEQSADQDRSLAVIENAKTQRPSTCNTVETLLVQESIAEEFLPKLARRLKTKEVKFHADSTALSILQGVSADVKPVTEQQLRNEWLTYDLNVVIVKGIEEAVEHIREYGSEHSESILTESQKLANQFVAQVDAAAVYVNASTRFTDGGQFGLGAEVAVSTQKLHARGPMGLEALTTYKWVCVGDYTSRA.

This sequence belongs to the gamma-glutamyl phosphate reductase family.

Its subcellular location is the cytoplasm. It catalyses the reaction L-glutamate 5-semialdehyde + phosphate + NADP(+) = L-glutamyl 5-phosphate + NADPH + H(+). Its pathway is amino-acid biosynthesis; L-proline biosynthesis; L-glutamate 5-semialdehyde from L-glutamate: step 2/2. Catalyzes the NADPH-dependent reduction of L-glutamate 5-phosphate into L-glutamate 5-semialdehyde and phosphate. The product spontaneously undergoes cyclization to form 1-pyrroline-5-carboxylate. The polypeptide is Gamma-glutamyl phosphate reductase (Mannheimia succiniciproducens (strain KCTC 0769BP / MBEL55E)).